Reading from the N-terminus, the 222-residue chain is MAKIYIVGTPIGNLSDITLRALETLKKVDYIACEDTRVSKILLNHYQINKPLFSYHKFNEKSKLNYIFELVESGSDVALISDSGMPVISDPGFLLIREAKKKNIDLEVIPGVSAFSMAFVKSSFPLPFSFLGFLNDKTGKRKNELKKLSAGISYISYVSKYKLIQTLKDLKEVFGLNVEVFLTRELTKKFENDYTGTIDEIIDQLGESIKGEFTLIFFIKQA.

It belongs to the methyltransferase superfamily. RsmI family.

Its subcellular location is the cytoplasm. The enzyme catalyses cytidine(1402) in 16S rRNA + S-adenosyl-L-methionine = 2'-O-methylcytidine(1402) in 16S rRNA + S-adenosyl-L-homocysteine + H(+). Catalyzes the 2'-O-methylation of the ribose of cytidine 1402 (C1402) in 16S rRNA. This is Ribosomal RNA small subunit methyltransferase I from Mycoplasmopsis pulmonis (strain UAB CTIP) (Mycoplasma pulmonis).